A 164-amino-acid polypeptide reads, in one-letter code: Large ribosomal subunit protein uL10 (164 aa).

Belongs to the universal ribosomal protein uL10 family. In terms of assembly, part of the ribosomal stalk of the 50S ribosomal subunit. The N-terminus interacts with L11 and the large rRNA to form the base of the stalk. The C-terminus forms an elongated spine to which L12 dimers bind in a sequential fashion forming a multimeric L10(L12)X complex.

Its function is as follows. Forms part of the ribosomal stalk, playing a central role in the interaction of the ribosome with GTP-bound translation factors. This chain is Large ribosomal subunit protein uL10, found in Aliivibrio salmonicida (strain LFI1238) (Vibrio salmonicida (strain LFI1238)).